The sequence spans 137 residues: Small ribosomal subunit protein uS12 (137 aa).

Disordered stretches follow at residues 1–21 (MPTI…KSDS) and 34–57 (VHTK…TPKK). Residue Asp-102 is modified to 3-methylthioaspartic acid.

It belongs to the universal ribosomal protein uS12 family. Part of the 30S ribosomal subunit. Contacts proteins S8 and S17. May interact with IF1 in the 30S initiation complex.

In terms of biological role, with S4 and S5 plays an important role in translational accuracy. Functionally, interacts with and stabilizes bases of the 16S rRNA that are involved in tRNA selection in the A site and with the mRNA backbone. Located at the interface of the 30S and 50S subunits, it traverses the body of the 30S subunit contacting proteins on the other side and probably holding the rRNA structure together. The combined cluster of proteins S8, S12 and S17 appears to hold together the shoulder and platform of the 30S subunit. The polypeptide is Small ribosomal subunit protein uS12 (Streptococcus uberis (strain ATCC BAA-854 / 0140J)).